The primary structure comprises 374 residues: Ribosomal RNA large subunit methyltransferase G (374 aa).

This sequence belongs to the methyltransferase superfamily. RlmG family.

It is found in the cytoplasm. It catalyses the reaction guanosine(1835) in 23S rRNA + S-adenosyl-L-methionine = N(2)-methylguanosine(1835) in 23S rRNA + S-adenosyl-L-homocysteine + H(+). Functionally, specifically methylates the guanine in position 1835 (m2G1835) of 23S rRNA. The sequence is that of Ribosomal RNA large subunit methyltransferase G from Pseudomonas aeruginosa (strain UCBPP-PA14).